A 552-amino-acid chain; its full sequence is Chaperonin GroEL 3 (552 aa).

ATP-binding positions include 30 to 33, Lys51, 87 to 91, Gly415, and Asp495; these read TLGP and DGTTT.

It belongs to the chaperonin (HSP60) family. Forms a cylinder of 14 subunits composed of two heptameric rings stacked back-to-back. Interacts with the co-chaperonin GroES.

Its subcellular location is the cytoplasm. The catalysed reaction is ATP + H2O + a folded polypeptide = ADP + phosphate + an unfolded polypeptide.. In terms of biological role, together with its co-chaperonin GroES, plays an essential role in assisting protein folding. The GroEL-GroES system forms a nano-cage that allows encapsulation of the non-native substrate proteins and provides a physical environment optimized to promote and accelerate protein folding. The polypeptide is Chaperonin GroEL 3 (Mesorhizobium japonicum (strain LMG 29417 / CECT 9101 / MAFF 303099) (Mesorhizobium loti (strain MAFF 303099))).